A 208-amino-acid chain; its full sequence is LexA repressor (208 aa).

The H-T-H motif DNA-binding region spans 29-49 (VREICGAVGLSSTSTVHGHIN). Active-site for autocatalytic cleavage activity residues include S129 and K167.

Belongs to the peptidase S24 family. In terms of assembly, homodimer.

It carries out the reaction Hydrolysis of Ala-|-Gly bond in repressor LexA.. Represses a number of genes involved in the response to DNA damage (SOS response), including recA and lexA. In the presence of single-stranded DNA, RecA interacts with LexA causing an autocatalytic cleavage which disrupts the DNA-binding part of LexA, leading to derepression of the SOS regulon and eventually DNA repair. This Limosilactobacillus fermentum (strain NBRC 3956 / LMG 18251) (Lactobacillus fermentum) protein is LexA repressor.